Consider the following 136-residue polypeptide: Small integral membrane protein 23 (136 aa).

Residues 1–31 lie on the Cytoplasmic side of the membrane; the sequence is MTIQKTGCRGREAAEVVEQRRRSHHCDDRKQ. The chain crosses the membrane as a helical; Signal-anchor for type II membrane protein span at residues 32-52; the sequence is TLLALLILVLYLGMGISGSSW. Residues 53–136 are Extracellular-facing; that stretch reads EVSGQTKDCN…DLRPEDPCFT (84 aa). Positions 92–124 form a coiled coil; sequence LKINLHGFLEKLEKEVRELEQLVRDLEFWLDAL.

It is found in the membrane. The sequence is that of Small integral membrane protein 23 (Smim23) from Mus musculus (Mouse).